The chain runs to 106 residues: MAAPGPVSPEAPFDPSKPPVIEGFSPTVYSNPEGFKEKFIRKTRENPMVPIGCLGTAAALTYGLYCFHRGQSHRSQLMMRTRIAAQGFTVVAILLGLAASAMKSQA.

Ala-2 bears the N-acetylalanine mark. The region spanning Val-20–Ala-106 is the HIG1 domain. 2 helical membrane passes run Pro-47–Phe-67 and Ile-83–Lys-103.

In terms of assembly, associates with cytochrome c oxidase (COX, complex IV); proposed complex component.

The protein resides in the mitochondrion membrane. Its subcellular location is the mitochondrion inner membrane. Functionally, proposed subunit of cytochrome c oxidase (COX, complex IV), which is the terminal component of the mitochondrial respiratory chain that catalyzes the reduction of oxygen to water. May be involved in cytochrome c oxidase activity. May play a role in the assembly of respiratory supercomplexes. The chain is HIG1 domain family member 2A (Higd2a) from Mus musculus (Mouse).